The primary structure comprises 239 residues: MELTWYGHSTWHVTVDDTELLIDPFFDNPHTDTDPEELGPDYVLLTHGHADHIGDVDRYEGCGLVATPEVVEYCKDNFGEFNAVGGMGMNLGGTVEIGDAFVTMHRADHTNGMETSYGASGGMPGGFIISDTKPTQVSDAESTTFYHAGDTGLMTEMRDVIGPFLEPDAAAVPVGDHFTMGPMQAAVAVDWLDVDHAFPMHYDTFPPIEIETQDFVNEVKGTGSDADVHVLDGDETFEL.

This sequence belongs to the UPF0173 family.

The chain is UPF0173 metal-dependent hydrolase rrnAC0300 from Haloarcula marismortui (strain ATCC 43049 / DSM 3752 / JCM 8966 / VKM B-1809) (Halobacterium marismortui).